The following is a 101-amino-acid chain: Pore-forming peptide amoebapore C (101 aa).

A signal peptide spans 1–24; the sequence is MKLFVLLCVFVLCLASQEKQQDRE. Positions 25 to 101 constitute a Saposin B-type domain; sequence IPVLCPVCTS…KLICGLIHAC (77 aa). Intrachain disulfides connect Cys29-Cys101, Cys32-Cys95, and Cys59-Cys70.

Monomer. Homodimer. Hexamer; formed during insertion in the membrane.

It is found in the cytoplasmic granule. Forms pores in the cell membrane of host cells. Has antibacterial activity against M.luteus, no activity against E.coli. Implicated in the cytolytic activity of the parasite. The polypeptide is Pore-forming peptide amoebapore C (Entamoeba histolytica (strain ATCC 30459 / HM-1:IMSS / ABRM)).